Reading from the N-terminus, the 230-residue chain is Probable septum site-determining protein MinC (230 aa).

This sequence belongs to the MinC family. Interacts with MinD and FtsZ.

Cell division inhibitor that blocks the formation of polar Z ring septums. Rapidly oscillates between the poles of the cell to destabilize FtsZ filaments that have formed before they mature into polar Z rings. Prevents FtsZ polymerization. In Erwinia tasmaniensis (strain DSM 17950 / CFBP 7177 / CIP 109463 / NCPPB 4357 / Et1/99), this protein is Probable septum site-determining protein MinC.